Here is a 510-residue protein sequence, read N- to C-terminus: Laccase (510 aa).

Plastocyanin-like domains lie at Pro45–Lys79, Lys99–Asp174, Tyr242–Lys317, and Leu372–Met506. Cu cation contacts are provided by His103, His105, His151, and His153. Cu cation-binding residues include His419, His422, His424, His491, Cys492, His493, His497, and Met502.

This sequence belongs to the multicopper oxidase family. It depends on Cu(2+) as a cofactor.

The catalysed reaction is 4 hydroquinone + O2 = 4 benzosemiquinone + 2 H2O. Resistant to alkali and organic solvents such as methanol, ethanol and acetone. Resistant to EDTA, which might be explained by the spatial protection of copper ions in the active sites. Inhibited by DMSO. Strongly inhibited by Fe(2+) and DTT. In terms of biological role, multicopper oxidase that catalyzes the oxidation of a variety of substrates, including phenolic and non-phenolic compounds. Substrates include 2,6-dimethoxyphenol (2,6-DMP) and the non-phenolic compound 2,2'-azino-bis(3-ethylbenzothiazoline-6-sulfonic acid) (ABTS). Cannot use guaiacol and catechol. This is Laccase from Bacillus stratosphericus.